The chain runs to 70 residues: Large ribosomal subunit protein bL31 (70 aa).

Cys-16, Cys-18, Cys-37, and Cys-40 together coordinate Zn(2+).

The protein belongs to the bacterial ribosomal protein bL31 family. Type A subfamily. As to quaternary structure, part of the 50S ribosomal subunit. Zn(2+) serves as cofactor.

Binds the 23S rRNA. The sequence is that of Large ribosomal subunit protein bL31 from Ectopseudomonas mendocina (strain ymp) (Pseudomonas mendocina).